Here is a 98-residue protein sequence, read N- to C-terminus: Omega-hexatoxin-Hr2b (98 aa).

The N-terminal stretch at Met-1–Cys-22 is a signal peptide. Residues Lys-24–Arg-56 constitute a propeptide that is removed on maturation. Cystine bridges form between Cys-60/Cys-74, Cys-67/Cys-80, and Cys-73/Cys-85. Leu-97 carries the leucine amide modification.

It belongs to the neurotoxin 15 family. 02 (omega-actx) subfamily. As to expression, expressed by the venom gland.

It is found in the secreted. In terms of biological role, potent inhibitor of insect, but not mammalian, voltage-gated calcium channels (Cav). The protein is Omega-hexatoxin-Hr2b of Atrax robustus (Sydney funnel-web spider).